The chain runs to 374 residues: Putative F-box protein At5g60060 (374 aa).

The F-box domain occupies Ser-9–Lys-61.

The chain is Putative F-box protein At5g60060 from Arabidopsis thaliana (Mouse-ear cress).